The following is a 324-amino-acid chain: Pseudouridylate synthase RPUSD4, mitochondrial (324 aa).

A mitochondrion-targeting transit peptide spans 1–11 (MAAAGGGATRG). Aspartate 105 is a catalytic residue.

This sequence belongs to the pseudouridine synthase RluA family.

The protein resides in the mitochondrion matrix. Its subcellular location is the nucleus. The protein localises to the cytoplasm. It catalyses the reaction uridine in 5S rRNA = pseudouridine in 5S rRNA. It carries out the reaction a uridine in tRNA = a pseudouridine in tRNA. The catalysed reaction is a uridine in mRNA = a pseudouridine in mRNA. Its function is as follows. Catalyzes uridine to pseudouridine isomerization (pseudouridylation) of different mitochondrial RNA substrates. Acts on position 1397 in 16S mitochondrial ribosomal RNA (16S mt-rRNA). This modification is required for the assembly of 16S mt-rRNA into a functional mitochondrial ribosome. Acts on position 39 in mitochondrial tRNA(Phe). Also catalyzes pseudouridylation of mRNAs in nucleus: acts as a regulator of pre-mRNA splicing by mediating pseudouridylation of pre-mRNAs at locations associated with alternatively spliced regions. Pseudouridylation of pre-mRNAs near splice sites directly regulates mRNA splicing and mRNA 3'-end processing. The chain is Pseudouridylate synthase RPUSD4, mitochondrial from Xenopus tropicalis (Western clawed frog).